Consider the following 330-residue polypeptide: DNA-directed RNA polymerase subunit alpha (330 aa).

The segment at 1–229 (MKNIKFIKPF…DHFNVLVELS (229 aa)) is alpha N-terminal domain (alpha-NTD). The segment at 245–330 (AHNSVLDLEI…HSVEEDKDKH (86 aa)) is alpha C-terminal domain (alpha-CTD).

It belongs to the RNA polymerase alpha chain family. Homodimer. The RNAP catalytic core consists of 2 alpha, 1 beta, 1 beta' and 1 omega subunit. When a sigma factor is associated with the core the holoenzyme is formed, which can initiate transcription.

The catalysed reaction is RNA(n) + a ribonucleoside 5'-triphosphate = RNA(n+1) + diphosphate. In terms of biological role, DNA-dependent RNA polymerase catalyzes the transcription of DNA into RNA using the four ribonucleoside triphosphates as substrates. The sequence is that of DNA-directed RNA polymerase subunit alpha from Onion yellows phytoplasma (strain OY-M).